Reading from the N-terminus, the 84-residue chain is LYR motif-containing protein 5B (84 aa).

The protein belongs to the complex I LYR family.

This Danio rerio (Zebrafish) protein is LYR motif-containing protein 5B (lyrm5b).